The chain runs to 424 residues: D-inositol 3-phosphate glycosyltransferase (424 aa).

Residue His-9 coordinates 1D-myo-inositol 3-phosphate. UDP-N-acetyl-alpha-D-glucosamine-binding positions include 15–16 (QP) and Gly-23. Residues 20–25 (DSGGMN), Lys-78, Tyr-110, Thr-134, and Arg-154 contribute to the 1D-myo-inositol 3-phosphate site. Residues Arg-231, Lys-236, and Arg-294 each contribute to the UDP-N-acetyl-alpha-D-glucosamine site. Tyr-303, Arg-304, and Ala-306 together coordinate Mg(2+). UDP-N-acetyl-alpha-D-glucosamine-binding residues include Glu-316 and Glu-324. Thr-330 provides a ligand contact to Mg(2+).

The protein belongs to the glycosyltransferase group 1 family. MshA subfamily. Homodimer.

It carries out the reaction 1D-myo-inositol 3-phosphate + UDP-N-acetyl-alpha-D-glucosamine = 1D-myo-inositol 2-acetamido-2-deoxy-alpha-D-glucopyranoside 3-phosphate + UDP + H(+). In terms of biological role, catalyzes the transfer of a N-acetyl-glucosamine moiety to 1D-myo-inositol 3-phosphate to produce 1D-myo-inositol 2-acetamido-2-deoxy-glucopyranoside 3-phosphate in the mycothiol biosynthesis pathway. This chain is D-inositol 3-phosphate glycosyltransferase, found in Corynebacterium efficiens (strain DSM 44549 / YS-314 / AJ 12310 / JCM 11189 / NBRC 100395).